A 184-amino-acid chain; its full sequence is ATP synthase subunit delta (184 aa).

Belongs to the ATPase delta chain family. F-type ATPases have 2 components, F(1) - the catalytic core - and F(0) - the membrane proton channel. F(1) has five subunits: alpha(3), beta(3), gamma(1), delta(1), epsilon(1). F(0) has three main subunits: a(1), b(2) and c(10-14). The alpha and beta chains form an alternating ring which encloses part of the gamma chain. F(1) is attached to F(0) by a central stalk formed by the gamma and epsilon chains, while a peripheral stalk is formed by the delta and b chains.

The protein resides in the cell inner membrane. In terms of biological role, f(1)F(0) ATP synthase produces ATP from ADP in the presence of a proton or sodium gradient. F-type ATPases consist of two structural domains, F(1) containing the extramembraneous catalytic core and F(0) containing the membrane proton channel, linked together by a central stalk and a peripheral stalk. During catalysis, ATP synthesis in the catalytic domain of F(1) is coupled via a rotary mechanism of the central stalk subunits to proton translocation. Functionally, this protein is part of the stalk that links CF(0) to CF(1). It either transmits conformational changes from CF(0) to CF(1) or is implicated in proton conduction. The protein is ATP synthase subunit delta of Rickettsia rickettsii (strain Iowa).